A 20-amino-acid polypeptide reads, in one-letter code: Brevinin-1SPd (20 aa).

Cysteines 14 and 20 form a disulfide.

Expressed by the skin glands.

The protein localises to the secreted. Antimicrobial peptide with activity against Gram-negative and Gram-positive bacteria (MIC=13 uM against E.coli, MIC=3 uM against S.aureus) and fungi (MIC=3 uM against C.albicans). Shows hemolytic activity on human erythrocytes (HC(50)=8 uM). The chain is Brevinin-1SPd from Lithobates septentrionalis (Mink frog).